Reading from the N-terminus, the 383-residue chain is Cytochrome b (383 aa).

Transmembrane regions (helical) follow at residues 32 to 52 (VGSL…FLAM), 76 to 98 (WLMR…LHMG), 113 to 133 (VWSM…MGYC), and 179 to 199 (FFAL…MHFM). Residues histidine 82 and histidine 96 each contribute to the heme b site. Residues histidine 183 and histidine 197 each coordinate heme b. Position 202 (histidine 202) interacts with a ubiquinone. Transmembrane regions (helical) follow at residues 225-245 (FVFK…LFVF), 289-309 (LGGV…PMTD), 321-341 (LSKL…NMGQ), and 348-368 (FIEL…MLVP).

Belongs to the cytochrome b family. Fungal cytochrome b-c1 complex contains 10 subunits; 3 respiratory subunits, 2 core proteins and 5 low-molecular weight proteins. Cytochrome b-c1 complex is a homodimer. Heme b serves as cofactor.

The protein resides in the mitochondrion inner membrane. Functionally, component of the ubiquinol-cytochrome c reductase complex (complex III or cytochrome b-c1 complex) that is part of the mitochondrial respiratory chain. The b-c1 complex mediates electron transfer from ubiquinol to cytochrome c. Contributes to the generation of a proton gradient across the mitochondrial membrane that is then used for ATP synthesis. The protein is Cytochrome b (COB) of Debaryomyces hansenii (strain ATCC 36239 / CBS 767 / BCRC 21394 / JCM 1990 / NBRC 0083 / IGC 2968) (Yeast).